The chain runs to 529 residues: Glycylpeptide N-tetradecanoyltransferase (529 aa).

Polar residues predominate over residues 1–10 (MSEQEGNQSE). The disordered stretch occupies residues 1–65 (MSEQEGNQSE…ANPATKLTPS (65 aa)). The span at 11–23 (HQSEHVGESEGKL) shows a compositional bias: basic and acidic residues. The span at 26–40 (ETPTTSQSTNASTGT) shows a compositional bias: polar residues. Tetradecanoyl-CoA-binding positions include 118 to 121 (FKFW), 252 to 254 (LCV), and 260 to 264 (SKRLT). The active-site Proton acceptor; via carboxylate is valine 529.

This sequence belongs to the NMT family. In terms of assembly, monomer.

The protein localises to the cytoplasm. The catalysed reaction is N-terminal glycyl-[protein] + tetradecanoyl-CoA = N-tetradecanoylglycyl-[protein] + CoA + H(+). Its function is as follows. Adds a myristoyl group to the N-terminal glycine residue of certain cellular proteins. The sequence is that of Glycylpeptide N-tetradecanoyltransferase from Ajellomyces capsulatus (Darling's disease fungus).